A 350-amino-acid chain; its full sequence is Anthranilate phosphoribosyltransferase (350 aa).

Residues G81, 84 to 85 (GD), T89, 91 to 94 (NIST), 109 to 117 (KHGGRSVSS), and S121 each bind 5-phospho-alpha-D-ribose 1-diphosphate. G81 serves as a coordination point for anthranilate. S93 provides a ligand contact to Mg(2+). R167 contacts anthranilate. Residues D230 and E231 each contribute to the Mg(2+) site.

Belongs to the anthranilate phosphoribosyltransferase family. Homodimer. Requires Mg(2+) as cofactor.

It carries out the reaction N-(5-phospho-beta-D-ribosyl)anthranilate + diphosphate = 5-phospho-alpha-D-ribose 1-diphosphate + anthranilate. Its pathway is amino-acid biosynthesis; L-tryptophan biosynthesis; L-tryptophan from chorismate: step 2/5. Its function is as follows. Catalyzes the transfer of the phosphoribosyl group of 5-phosphorylribose-1-pyrophosphate (PRPP) to anthranilate to yield N-(5'-phosphoribosyl)-anthranilate (PRA). The polypeptide is Anthranilate phosphoribosyltransferase (Nitrosospira multiformis (strain ATCC 25196 / NCIMB 11849 / C 71)).